We begin with the raw amino-acid sequence, 374 residues long: Chaperone protein DnaJ (374 aa).

Residues 5-70 form the J domain; sequence DFYEILGVGK…QKRDAYDRYG (66 aa). The segment at 29 to 50 is disordered; that stretch reads AMKHHPDRNPDSKGAEDKFKEA. Basic and acidic residues predominate over residues 35-50; that stretch reads DRNPDSKGAEDKFKEA. The CR-type zinc finger occupies 134-212; sequence GYDTTIRVPS…CSGAGKIKRN (79 aa). Zn(2+) contacts are provided by Cys-147, Cys-150, Cys-164, Cys-167, Cys-186, Cys-189, Cys-200, and Cys-203. CXXCXGXG motif repeat units follow at residues 147–154, 164–171, 186–193, and 200–207; these read CETCDGSG, CTTCGGHG, CPKCHGSG, and CGTCSGAG.

Belongs to the DnaJ family. In terms of assembly, homodimer. Requires Zn(2+) as cofactor.

It localises to the cytoplasm. In terms of biological role, participates actively in the response to hyperosmotic and heat shock by preventing the aggregation of stress-denatured proteins and by disaggregating proteins, also in an autonomous, DnaK-independent fashion. Unfolded proteins bind initially to DnaJ; upon interaction with the DnaJ-bound protein, DnaK hydrolyzes its bound ATP, resulting in the formation of a stable complex. GrpE releases ADP from DnaK; ATP binding to DnaK triggers the release of the substrate protein, thus completing the reaction cycle. Several rounds of ATP-dependent interactions between DnaJ, DnaK and GrpE are required for fully efficient folding. Also involved, together with DnaK and GrpE, in the DNA replication of plasmids through activation of initiation proteins. The sequence is that of Chaperone protein DnaJ from Janthinobacterium sp. (strain Marseille) (Minibacterium massiliensis).